Reading from the N-terminus, the 116-residue chain is U16-barytoxin-Tl1a (116 aa).

The first 20 residues, 1-20 (MKTIIVFLSLLVLATKFGDA), serve as a signal peptide directing secretion. A propeptide spanning residues 21 to 74 (KEGVNQKQKKEVTQNEFREEYLNEMAAMSLVQQLEAIERALFENEAGRNSRQKR) is cleaved from the precursor. Cystine bridges form between Cys75–Cys90, Cys82–Cys95, and Cys89–Cys110.

Belongs to the neurotoxin 14 (magi-1) family. 06 (ICK-Trit) subfamily. Expressed by the venom gland.

The protein localises to the secreted. In terms of biological role, ion channel inhibitor. In Trittame loki (Brush-footed trapdoor spider), this protein is U16-barytoxin-Tl1a.